Here is a 394-residue protein sequence, read N- to C-terminus: NAD(P)H-quinone oxidoreductase subunit H (394 aa).

It belongs to the complex I 49 kDa subunit family. NDH-1 can be composed of about 15 different subunits; different subcomplexes with different compositions have been identified which probably have different functions.

It is found in the cellular thylakoid membrane. It carries out the reaction a plastoquinone + NADH + (n+1) H(+)(in) = a plastoquinol + NAD(+) + n H(+)(out). The enzyme catalyses a plastoquinone + NADPH + (n+1) H(+)(in) = a plastoquinol + NADP(+) + n H(+)(out). In terms of biological role, NDH-1 shuttles electrons from an unknown electron donor, via FMN and iron-sulfur (Fe-S) centers, to quinones in the respiratory and/or the photosynthetic chain. The immediate electron acceptor for the enzyme in this species is believed to be plastoquinone. Couples the redox reaction to proton translocation, and thus conserves the redox energy in a proton gradient. Cyanobacterial NDH-1 also plays a role in inorganic carbon-concentration. This Nostoc sp. (strain PCC 7120 / SAG 25.82 / UTEX 2576) protein is NAD(P)H-quinone oxidoreductase subunit H.